A 345-amino-acid polypeptide reads, in one-letter code: Ketol-acid reductoisomerase (NADP(+)) (345 aa).

The region spanning 2 to 182 (AKVYHDSSAD…GTTRAGVLET (181 aa)) is the KARI N-terminal Rossmann domain. Residues 25–28 (YGSQ), arginine 48, serine 51, serine 53, and 83–86 (DTEQ) contribute to the NADP(+) site. The active site involves histidine 108. An NADP(+)-binding site is contributed by glycine 134. A KARI C-terminal knotted domain is found at 183–328 (TFKEETETDL…AQLRDMMTFL (146 aa)). Residues aspartate 191, glutamate 195, glutamate 227, and glutamate 231 each coordinate Mg(2+). Serine 252 serves as a coordination point for substrate.

It belongs to the ketol-acid reductoisomerase family. It depends on Mg(2+) as a cofactor.

It catalyses the reaction (2R)-2,3-dihydroxy-3-methylbutanoate + NADP(+) = (2S)-2-acetolactate + NADPH + H(+). The enzyme catalyses (2R,3R)-2,3-dihydroxy-3-methylpentanoate + NADP(+) = (S)-2-ethyl-2-hydroxy-3-oxobutanoate + NADPH + H(+). The protein operates within amino-acid biosynthesis; L-isoleucine biosynthesis; L-isoleucine from 2-oxobutanoate: step 2/4. Its pathway is amino-acid biosynthesis; L-valine biosynthesis; L-valine from pyruvate: step 2/4. In terms of biological role, involved in the biosynthesis of branched-chain amino acids (BCAA). Catalyzes an alkyl-migration followed by a ketol-acid reduction of (S)-2-acetolactate (S2AL) to yield (R)-2,3-dihydroxy-isovalerate. In the isomerase reaction, S2AL is rearranged via a Mg-dependent methyl migration to produce 3-hydroxy-3-methyl-2-ketobutyrate (HMKB). In the reductase reaction, this 2-ketoacid undergoes a metal-dependent reduction by NADPH to yield (R)-2,3-dihydroxy-isovalerate. This chain is Ketol-acid reductoisomerase (NADP(+)), found in Koribacter versatilis (strain Ellin345).